Reading from the N-terminus, the 488-residue chain is MNLAEICENAKKGREYALLGNYDSSMVYYQGVIQQIQRHCQSLRDPATKAKWQQVRQELLEEYEQVKSIVSTLESFKMDKPPDFPVSCRDEPFRDPAVWPPPVPAEHRAPPQIRRPNREVRPLRKDMGAGARGLVGRAHQISKSDKAASRDKDYRARGRDDKARKNMQDGASDGEIPKFDGAGYDKDLVEALERDIVSRNPSIHWDDIADLEEAKKLLREAVVLPMWMPDFFKGIRRPWKGVLMVGPPGTGKTMLAKAVATECGTTFFNVSSSTLTSKYRGESEKLVRLLFEMARFYAPTTIFIDEIDSICSRRGTSDEHEASRRVKSELLIQMDGVGGALENDDPSKMVMVLAATNFPWDIDEALRRRLEKRIYIPLPTAKGRAELLKISLREVELDPDIHLEDIAEKTEGYSGADITNICRDASLMAMRRRINGLSPEEIRALSKEELQMPVTRGDLELALKKIAKSVSAADLEKYEKWMVEFGSA.

Residue Met-1 is modified to N-acetylmethionine. The tract at residues 128 to 179 is disordered; it reads GAGARGLVGRAHQISKSDKAASRDKDYRARGRDDKARKNMQDGASDGEIPKF. A compositionally biased stretch (basic and acidic residues) spans 142-167; sequence SKSDKAASRDKDYRARGRDDKARKNM. Phosphoserine is present on Ser-172. Residue 246–253 coordinates ATP; the sequence is GPPGTGKT.

Belongs to the AAA ATPase family. Katanin p60 subunit A1 subfamily. A-like 1 sub-subfamily. Interacts with KATNB1 and KATNBL1.

The protein localises to the cytoplasm. Its subcellular location is the cytoskeleton. The protein resides in the spindle pole. It is found in the spindle. It catalyses the reaction n ATP + n H2O + a microtubule = n ADP + n phosphate + (n+1) alpha/beta tubulin heterodimers.. In terms of biological role, regulates microtubule dynamics in Sertoli cells, a process that is essential for spermiogenesis and male fertility. Severs microtubules in an ATP-dependent manner, promoting rapid reorganization of cellular microtubule arrays. Has microtubule-severing activity in vitro. This is Katanin p60 ATPase-containing subunit A-like 1 (Katnal1) from Rattus norvegicus (Rat).